Consider the following 195-residue polypeptide: Granulocyte colony-stimulating factor (195 aa).

The signal sequence occupies residues 1-21 (MKLMALQLLLWHIALWMVPEA). Intrachain disulfides connect Cys57/Cys63 and Cys85/Cys95. Thr154 is a glycosylation site (O-linked (GalNAc...) threonine).

This sequence belongs to the IL-6 superfamily. Monomer. In terms of processing, O-glycosylated.

The protein localises to the secreted. Granulocyte/macrophage colony-stimulating factors are cytokines that act in hematopoiesis by controlling the production, differentiation, and function of 2 related white cell populations of the blood, the granulocytes and the monocytes-macrophages. This CSF induces granulocytes. The chain is Granulocyte colony-stimulating factor (CSF3) from Sus scrofa (Pig).